Consider the following 95-residue polypeptide: Large ribosomal subunit protein uL22c (95 aa).

Belongs to the universal ribosomal protein uL22 family. As to quaternary structure, part of the 50S ribosomal subunit.

The protein localises to the plastid. The protein resides in the chloroplast. This protein binds specifically to 23S rRNA. Functionally, the globular domain of the protein is located near the polypeptide exit tunnel on the outside of the subunit, while an extended beta-hairpin is found that lines the wall of the exit tunnel in the center of the 70S ribosome. In Cyanidioschyzon merolae (strain NIES-3377 / 10D) (Unicellular red alga), this protein is Large ribosomal subunit protein uL22c (rpl22).